The following is a 404-amino-acid chain: Probable tRNA sulfurtransferase (404 aa).

In terms of domain architecture, THUMP spans 60 to 165; it reads QPVAESLKQI…EEAAYISYET (106 aa). ATP is bound by residues 183-184, 208-209, arginine 265, glycine 287, and glutamine 296; these read ML and HF.

It belongs to the ThiI family.

Its subcellular location is the cytoplasm. It carries out the reaction [ThiI sulfur-carrier protein]-S-sulfanyl-L-cysteine + a uridine in tRNA + 2 reduced [2Fe-2S]-[ferredoxin] + ATP + H(+) = [ThiI sulfur-carrier protein]-L-cysteine + a 4-thiouridine in tRNA + 2 oxidized [2Fe-2S]-[ferredoxin] + AMP + diphosphate. It catalyses the reaction [ThiS sulfur-carrier protein]-C-terminal Gly-Gly-AMP + S-sulfanyl-L-cysteinyl-[cysteine desulfurase] + AH2 = [ThiS sulfur-carrier protein]-C-terminal-Gly-aminoethanethioate + L-cysteinyl-[cysteine desulfurase] + A + AMP + 2 H(+). It functions in the pathway cofactor biosynthesis; thiamine diphosphate biosynthesis. Catalyzes the ATP-dependent transfer of a sulfur to tRNA to produce 4-thiouridine in position 8 of tRNAs, which functions as a near-UV photosensor. Also catalyzes the transfer of sulfur to the sulfur carrier protein ThiS, forming ThiS-thiocarboxylate. This is a step in the synthesis of thiazole, in the thiamine biosynthesis pathway. The sulfur is donated as persulfide by IscS. This is Probable tRNA sulfurtransferase from Streptococcus gordonii (strain Challis / ATCC 35105 / BCRC 15272 / CH1 / DL1 / V288).